A 741-amino-acid polypeptide reads, in one-letter code: T-box transcription factor TBX3 (741 aa).

The segment at residues 107 to 220 (LEAKELWDQF…NNISDKHGFT (114 aa)) is a DNA-binding region (T-box; first part). The T-box; second part DNA-binding region spans 241 to 305 (ILNSMHKYQP…NNPFAKGFRD (65 aa)). Ser-369 is subject to Phosphoserine. The segment at 369-469 (SEAESDAEAE…EGPVATKVDE (101 aa)) is disordered. 2 stretches are compositionally biased toward basic and acidic residues: residues 377–386 (AESKEEHGPE) and 420–437 (SRARDTARLDKASPDSRH). Phosphoserine is present on residues Ser-432, Ser-438, Ser-456, Ser-705, Ser-736, Ser-738, and Ser-740. The span at 438-447 (SPATISSSTR) shows a compositional bias: polar residues.

Interacts with PML. In terms of tissue distribution, in adults, highest levels in lung. Also found in brain, heart, kidney, liver and ovary.

It localises to the nucleus. In terms of biological role, transcriptional repressor involved in developmental processes. Binds to the palindromic T site 5'-TTCACACCTAGGTGTGAA-3' DNA sequence, or a half-site, which are present in the regulatory region of several genes. Probably plays a role in limb pattern formation. Required for mammary placode induction, and maintenance of the mammary buds during development. Involved in branching morphogenesis in both developing lungs and adult mammary glands, via negative modulation of target genes; acting redundantly with TBX2. Required, together with TBX2, to maintain cell proliferation in the embryonic lung mesenchyme; perhaps acting downstream of SHH, BMP and TGFbeta signaling. Involved in modulating early inner ear development, acting independently of, and also redundantly with, TBX2 in different subregions of the developing ear. Acts as a negative regulator of PML function in cellular senescence. This chain is T-box transcription factor TBX3 (Tbx3), found in Mus musculus (Mouse).